We begin with the raw amino-acid sequence, 439 residues long: Homogentisate 1,2-dioxygenase (439 aa).

H289 (proton acceptor) is an active-site residue. Fe cation contacts are provided by H332 and E338. Positions 347 and 368 each coordinate homogentisate. A Fe cation-binding site is contributed by H368.

It belongs to the homogentisate dioxygenase family. As to quaternary structure, hexamer; dimer of trimers. The cofactor is Fe cation.

It carries out the reaction homogentisate + O2 = 4-maleylacetoacetate + H(+). It functions in the pathway amino-acid degradation; L-phenylalanine degradation; acetoacetate and fumarate from L-phenylalanine: step 4/6. Functionally, involved in the catabolism of homogentisate (2,5-dihydroxyphenylacetate or 2,5-OH-PhAc), a central intermediate in the degradation of phenylalanine and tyrosine. Catalyzes the oxidative ring cleavage of the aromatic ring of homogentisate to yield maleylacetoacetate. The chain is Homogentisate 1,2-dioxygenase from Xanthomonas euvesicatoria pv. vesicatoria (strain 85-10) (Xanthomonas campestris pv. vesicatoria).